A 258-amino-acid polypeptide reads, in one-letter code: MMSENKLHVIDLHKRYGGHEVLKGVSLQARAGDVISIIGSSGSGKSTFLRCINFLEKPSEGAIIVNGQNINLVRDKDGQLKVADKNQLRLLRTRLTMVFQHFNLWSHMTVLENVMEAPIQVLGLSKHDARERALKYLAKVGIDERAQGKYPVHLSGGQQQRVSIARALAMEPDVLLFDEPTSALDPELVGEVLRIMQQLAEEGKTMVVVTHEMGFARHVSSHVIFLHQGKIEEEGDPEQVFGNPQSPRLQQFLKGSLK.

The ABC transporter domain occupies 7–253; that stretch reads LHVIDLHKRY…PQSPRLQQFL (247 aa). Positions 41, 42, 44, 45, 46, and 47 each coordinate ATP.

Belongs to the ABC transporter superfamily. As to quaternary structure, the HisPMQJ complex is composed of two ATP-binding proteins (HisP), two transmembrane proteins (HisM and HisQ) and a solute-binding protein (HisJ). The HisPMQ-ArgT complex is composed of two ATP-binding proteins (HisP), two transmembrane proteins (HisM and HisQ) and a solute-binding protein (ArgT).

It is found in the cell inner membrane. The catalysed reaction is a polar amino acid(out) + ATP + H2O = a polar amino acid(in) + ADP + phosphate + H(+). The enzyme catalyses L-histidine(out) + ATP + H2O = L-histidine(in) + ADP + phosphate + H(+). It carries out the reaction L-lysine(out) + ATP + H2O = L-lysine(in) + ADP + phosphate + H(+). It catalyses the reaction L-arginine(out) + ATP + H2O = L-arginine(in) + ADP + phosphate + H(+). The catalysed reaction is L-ornithine(out) + ATP + H2O = L-ornithine(in) + ADP + phosphate + H(+). Isolated, soluble HisP has a very low ATPase activity. ATPase activity is slightly increased in the presence of HisM and HisQ, and strongly increased when HisJ is also present. In terms of biological role, part of the ABC transporter complex HisPMQJ involved in histidine transport. Is also part of the ABC transporter complex HisPMQ-ArgT involved in lysine/arginine/ornithine transport. Shows ATPase activity. Responsible for energy coupling to the transport system. In Salmonella typhimurium (strain LT2 / SGSC1412 / ATCC 700720), this protein is Histidine/lysine/arginine/ornithine transport ATP-binding protein HisP.